The sequence spans 637 residues: Limonene synthase, chloroplastic (637 aa).

A chloroplast-targeting transit peptide spans 1-56 (MALLSIVSLQVPKSCGLKSLISSSNVQKALCISTAVPTLRMRRRQKALVINMKLTT). Mg(2+) contacts are provided by Asp388, Asp392, and Asp540. Positions 388–392 (DDIYD) match the DDXXD motif motif.

The protein belongs to the terpene synthase family. Tpsd subfamily. Mg(2+) serves as cofactor. Mn(2+) is required as a cofactor. Requires K(+) as cofactor.

It is found in the plastid. It localises to the chloroplast. The catalysed reaction is (2E)-geranyl diphosphate = (4S)-limonene + diphosphate. It functions in the pathway terpene metabolism; oleoresin biosynthesis. Involved in defensive oleoresin formation in conifers in response to insect attack or other injury. Involved in monoterpene (C10) olefins biosynthesis. In Abies grandis (Grand fir), this protein is Limonene synthase, chloroplastic (ag10).